Here is a 30-residue protein sequence, read N- to C-terminus: Ornithine carbamoyltransferase, catabolic (30 aa).

Belongs to the aspartate/ornithine carbamoyltransferase superfamily. OTCase family.

Its subcellular location is the cytoplasm. It catalyses the reaction carbamoyl phosphate + L-ornithine = L-citrulline + phosphate + H(+). It participates in amino-acid degradation; L-arginine degradation via ADI pathway; carbamoyl phosphate from L-arginine: step 2/2. In Aeromonas caviae (Aeromonas punctata), this protein is Ornithine carbamoyltransferase, catabolic (arcB).